Reading from the N-terminus, the 739-residue chain is Phosphoribosylformylglycinamidine synthase subunit PurL (739 aa).

The active site involves H54. Positions 57 and 96 each coordinate ATP. E98 provides a ligand contact to Mg(2+). Substrate-binding positions include 99–102 and R121; that span reads SHNH. H100 (proton acceptor) is an active-site residue. D122 contacts Mg(2+). Q245 serves as a coordination point for substrate. Residue D273 participates in Mg(2+) binding. Position 317–319 (317–319) interacts with substrate; that stretch reads ESQ. 2 residues coordinate ATP: D500 and G537. N538 is a Mg(2+) binding site. S540 contributes to the substrate binding site.

This sequence belongs to the FGAMS family. In terms of assembly, monomer. Part of the FGAM synthase complex composed of 1 PurL, 1 PurQ and 2 PurS subunits.

Its subcellular location is the cytoplasm. It carries out the reaction N(2)-formyl-N(1)-(5-phospho-beta-D-ribosyl)glycinamide + L-glutamine + ATP + H2O = 2-formamido-N(1)-(5-O-phospho-beta-D-ribosyl)acetamidine + L-glutamate + ADP + phosphate + H(+). It participates in purine metabolism; IMP biosynthesis via de novo pathway; 5-amino-1-(5-phospho-D-ribosyl)imidazole from N(2)-formyl-N(1)-(5-phospho-D-ribosyl)glycinamide: step 1/2. Part of the phosphoribosylformylglycinamidine synthase complex involved in the purines biosynthetic pathway. Catalyzes the ATP-dependent conversion of formylglycinamide ribonucleotide (FGAR) and glutamine to yield formylglycinamidine ribonucleotide (FGAM) and glutamate. The FGAM synthase complex is composed of three subunits. PurQ produces an ammonia molecule by converting glutamine to glutamate. PurL transfers the ammonia molecule to FGAR to form FGAM in an ATP-dependent manner. PurS interacts with PurQ and PurL and is thought to assist in the transfer of the ammonia molecule from PurQ to PurL. In Bacillus mycoides (strain KBAB4) (Bacillus weihenstephanensis), this protein is Phosphoribosylformylglycinamidine synthase subunit PurL.